We begin with the raw amino-acid sequence, 186 residues long: Potassium-transporting ATPase KdpC subunit (186 aa).

The helical transmembrane segment at 10–30 (LTIITMVLCGFLFPLAITLIG) threads the bilayer.

This sequence belongs to the KdpC family. The system is composed of three essential subunits: KdpA, KdpB and KdpC.

Its subcellular location is the cell membrane. Part of the high-affinity ATP-driven potassium transport (or Kdp) system, which catalyzes the hydrolysis of ATP coupled with the electrogenic transport of potassium into the cytoplasm. This subunit acts as a catalytic chaperone that increases the ATP-binding affinity of the ATP-hydrolyzing subunit KdpB by the formation of a transient KdpB/KdpC/ATP ternary complex. This is Potassium-transporting ATPase KdpC subunit from Staphylococcus aureus (strain MSSA476).